Reading from the N-terminus, the 165-residue chain is Large ribosomal subunit protein uL10 (165 aa).

Belongs to the universal ribosomal protein uL10 family. As to quaternary structure, part of the ribosomal stalk of the 50S ribosomal subunit. The N-terminus interacts with L11 and the large rRNA to form the base of the stalk. The C-terminus forms an elongated spine to which L12 dimers bind in a sequential fashion forming a multimeric L10(L12)X complex.

Forms part of the ribosomal stalk, playing a central role in the interaction of the ribosome with GTP-bound translation factors. This chain is Large ribosomal subunit protein uL10, found in Mycoplasma mycoides subsp. mycoides SC (strain CCUG 32753 / NCTC 10114 / PG1).